The sequence spans 167 residues: Lipoprotein signal peptidase (167 aa).

The next 4 membrane-spanning stretches (helical) occupy residues 5 to 25, 42 to 62, 70 to 90, and 102 to 122; these read ICST…LDLG, LIPY…SFLA, WFFA…MYRA, and ALII…GFVI. Catalysis depends on residues Asp-123 and Asp-141. The chain crosses the membrane as a helical span at residues 137 to 157; that stretch reads FNIADMAICIGAGLVIIDSFL.

This sequence belongs to the peptidase A8 family.

It localises to the cell inner membrane. The catalysed reaction is Release of signal peptides from bacterial membrane prolipoproteins. Hydrolyzes -Xaa-Yaa-Zaa-|-(S,diacylglyceryl)Cys-, in which Xaa is hydrophobic (preferably Leu), and Yaa (Ala or Ser) and Zaa (Gly or Ala) have small, neutral side chains.. It participates in protein modification; lipoprotein biosynthesis (signal peptide cleavage). In terms of biological role, this protein specifically catalyzes the removal of signal peptides from prolipoproteins. The protein is Lipoprotein signal peptidase of Photorhabdus laumondii subsp. laumondii (strain DSM 15139 / CIP 105565 / TT01) (Photorhabdus luminescens subsp. laumondii).